The chain runs to 244 residues: Ribonuclease P protein component 3 (244 aa).

This sequence belongs to the eukaryotic/archaeal RNase P protein component 3 family. As to quaternary structure, consists of a catalytic RNA component and at least 4-5 protein subunits.

The protein localises to the cytoplasm. The catalysed reaction is Endonucleolytic cleavage of RNA, removing 5'-extranucleotides from tRNA precursor.. Part of ribonuclease P, a protein complex that generates mature tRNA molecules by cleaving their 5'-ends. The polypeptide is Ribonuclease P protein component 3 (Methanopyrus kandleri (strain AV19 / DSM 6324 / JCM 9639 / NBRC 100938)).